The chain runs to 186 residues: MKLIVGLGNYGSQYEATRHNAGWIALDQLIEKYGFTQQKNEHNSIIFFSTVNNEKVLFVKPQTYMNNSGIAIQAIMHYYKIEIKDLVILHDEKDFPVGKNQFKMNGSAAGHNGIKSVIQYLGTQNFNRYRIGIGQPEQGWKIIDWVLSKFKPEELENIILASKSISNFVNDWTKGTTFQNIMNLYN.

Tyr-14 contacts tRNA. The active-site Proton acceptor is His-19. 3 residues coordinate tRNA: Tyr-64, Asn-66, and Asn-112.

This sequence belongs to the PTH family. As to quaternary structure, monomer.

It is found in the cytoplasm. It catalyses the reaction an N-acyl-L-alpha-aminoacyl-tRNA + H2O = an N-acyl-L-amino acid + a tRNA + H(+). Functionally, hydrolyzes ribosome-free peptidyl-tRNAs (with 1 or more amino acids incorporated), which drop off the ribosome during protein synthesis, or as a result of ribosome stalling. Its function is as follows. Catalyzes the release of premature peptidyl moieties from peptidyl-tRNA molecules trapped in stalled 50S ribosomal subunits, and thus maintains levels of free tRNAs and 50S ribosomes. The chain is Peptidyl-tRNA hydrolase from Mesoplasma florum (strain ATCC 33453 / NBRC 100688 / NCTC 11704 / L1) (Acholeplasma florum).